The sequence spans 563 residues: Membrane protein insertase YidC (563 aa).

Residues 1-21 traverse the membrane as a helical segment; it reads MDIKRTILIVALAIVTYVGVL. A disordered region spans residues 43 to 62; it reads APGIPDTAAGTNGSASADVP. 5 helical membrane passes run 344 to 364, 370 to 390, 440 to 460, 471 to 491, and 518 to 538; these read LELT…FWLL, ILGN…GLFF, LGGC…YWVL, WILW…PIIM, and PIIF…YWVV.

The protein belongs to the OXA1/ALB3/YidC family. Type 1 subfamily. Interacts with the Sec translocase complex via SecD. Specifically interacts with transmembrane segments of nascent integral membrane proteins during membrane integration.

The protein resides in the cell inner membrane. Functionally, required for the insertion and/or proper folding and/or complex formation of integral membrane proteins into the membrane. Involved in integration of membrane proteins that insert both dependently and independently of the Sec translocase complex, as well as at least some lipoproteins. Aids folding of multispanning membrane proteins. This chain is Membrane protein insertase YidC, found in Pseudomonas syringae pv. syringae (strain B728a).